A 1507-amino-acid chain; its full sequence is Nonribosomal peptide synthetase ataP (1507 aa).

In terms of domain architecture, Carrier 1 spans 1 to 72 (MQINIRNEIA…DIISRSTGMY (72 aa)). Serine 33 is modified (O-(pantetheine 4'-phosphoryl)serine). A disordered region spans residues 98–119 (TPSPSPSGPSTGCPTPDTLDTT). Residues 105 to 115 (GPSTGCPTPDT) are compositionally biased toward low complexity. The interval 163-429 (TRMAWQQVLE…NRVFRQLVQL (267 aa)) is condensation 1. The segment at 514 to 893 (AAAENPEACA…GRNDRQIKLR (380 aa)) is adenylation. The Carrier 2 domain occupies 988-1065 (NEMSPTEQRV…DLSQRIDKLQ (78 aa)). Serine 1025 carries the O-(pantetheine 4'-phosphoryl)serine modification. A condensation 2 region spans residues 1099–1471 (TSNTSFTVSF…MTALRLLIKN (373 aa)).

This sequence belongs to the NRP synthetase family.

It functions in the pathway mycotoxin biosynthesis. Its function is as follows. Nonribosomal peptide synthetase; part of the gene cluster that mediates the biosynthesis of acetylaranotin, a member of the epipolythiodioxopiperazine (ETP) class of toxins characterized by a disulfide-bridged cyclic dipeptide. The first step of acetylaranotin biosynthesis is performed by the NRPS ataP which produces diketopiperazine cyclo-L-Phe-L-Phe via the condensation of 2 phenylalanines (L-Phe). The ataC domain of ataTC then catalyzes the formation of bishydroxylation of cyclo-L-Phe-L-Phe. The glutathione S-transferase domain ataG in ataIMG further catalyzes the conjugation of two glutathiones to the bishydroxylated intermediate. Next, the dipeptidase ataJ removes the Glu residues. The following step is performed by the carbon sulfur lyase domain ataI of ataIMG which may convert the bis-cysteinyl adduct to yield an epidithiol intermediate. The ataT domain from ataTC then catalyzes the oxidation of the free dithiols, followed by a cyclization step catalyzed by the cytochrome P450 ataF. AtaF probably acts as an epoxidase to promote a dual epoxidation formation at C8 and C9 along with C8' and C9', followed by the spontaneous nucleophilic attack of the amide nitrogens N10 and N10' to yield an intermediate with the pyrrolidine partial structure. The final steps of acetylaranotin biosynthesis involve the acetylation and ring rearrangement of an epitetrathiodiketopiperazine intermediate to produce acetylaranotin. AtaH probably catalyzes the acetylation of epitetrathiodiketopiperazine to produce a diacetate and ataY is responsible for the formation of the dihydrooxepin moiety that converts the diacetate intermediate to acetylaranotin via acetylapoaranotin. Both enzymes could function independently in the absence of the other. The acetylaranotin bis-thiomethyltransferase ataS located outside of acetylaranotin gene cluster is the main thiomethyltransferase responsible for converting acetylaranotin and its related intermediates to their methylated forms. The protein is Nonribosomal peptide synthetase ataP of Aspergillus terreus (strain NIH 2624 / FGSC A1156).